The sequence spans 391 residues: MEKIGVLLMNLGGPERITDVGPFLYNLFSDPEIIRLPVPAFQKPLAWLISTLRSTTSQQAYLSIGGGSPIRRITEQQARELQSKLRDKGLNVTTYIAMRYWHPFTESAIADMKADGIDQIVVLPLYPHFSISTSGSSFRELKKLRDSDSDFKKIPMRCVRSWFSQSGYLKSMVELISEQISLCESPADAHIFFTAHGVPKSYVEEAGDPYKEQIEDCSLLIINELEKYLGHSNSYTLSYQSRVGPVEWLKPYTEEVLTDLGKAKVNDLIVVPISFVGEHIETLQEIDIEYKEIAEKAGIVNFRRVKALNTHPTFIEGLSDLVVSSLNGPVVNIEKASELPEKVKLYPQEKWQWGWNNSSEVWNGRVAMIVFLILFIELISGSGPLHKLGIL.

The Fe cation site is built by H196 and E281.

Belongs to the ferrochelatase family.

It localises to the cytoplasm. It carries out the reaction heme b + 2 H(+) = protoporphyrin IX + Fe(2+). Its pathway is porphyrin-containing compound metabolism; protoheme biosynthesis; protoheme from protoporphyrin-IX: step 1/1. Catalyzes the ferrous insertion into protoporphyrin IX. The chain is Ferrochelatase from Prochlorococcus marinus (strain MIT 9515).